The chain runs to 329 residues: Glutamyl-tRNA reductase (329 aa).

Substrate contacts are provided by residues 51–54, Ser-99, 104–106, and Gln-110; these read TCLR and EDQ. Cys-52 acts as the Nucleophile in catalysis. 179–184 provides a ligand contact to NADP(+); that stretch reads GIGELA.

The protein belongs to the glutamyl-tRNA reductase family. As to quaternary structure, homodimer.

The enzyme catalyses (S)-4-amino-5-oxopentanoate + tRNA(Glu) + NADP(+) = L-glutamyl-tRNA(Glu) + NADPH + H(+). It participates in porphyrin-containing compound metabolism; protoporphyrin-IX biosynthesis; 5-aminolevulinate from L-glutamyl-tRNA(Glu): step 1/2. In terms of biological role, catalyzes the NADPH-dependent reduction of glutamyl-tRNA(Glu) to glutamate 1-semialdehyde (GSA). The polypeptide is Glutamyl-tRNA reductase (Fusobacterium nucleatum subsp. nucleatum (strain ATCC 25586 / DSM 15643 / BCRC 10681 / CIP 101130 / JCM 8532 / KCTC 2640 / LMG 13131 / VPI 4355)).